A 263-amino-acid chain; its full sequence is MSEPSYDHQVDRSHMQVSDEIAIQISQMNKWYGQFHVLRDINLTVHRGERIVIAGPSGSGKSTMIRCINRLEEHQSGKIIVDGIELTSDLKNIDKVRSEVGMVFQHFNLFPHLTILENLTLAPIWVRKVPKREAEETAMYYLEKVKIPEQAQKYPGQLSGGQQQRVAIARSLCMKPKIMLFDEPTSALDPEMIKEVLDTMIQLAEEGMTMLCVAHEMGFAQAVANRVIFMADGQIVEQNNPHDFFRNPQSERTKQFLSQILGH.

Residues 23 to 257 (IQISQMNKWY…PQSERTKQFL (235 aa)) form the ABC transporter domain. Residue 55-62 (GPSGSGKS) participates in ATP binding.

This sequence belongs to the ABC transporter superfamily. BztB and BztC form a heterodimer which can form a membrane complex with a homodimer of BztD.

The protein localises to the cell membrane. In terms of biological role, part of a binding-protein-dependent transport system for glutamate, glutamine, aspartate, asparagine. Probably responsible for energy coupling to the transport system. The chain is Glutamate/glutamine/aspartate/asparagine transport ATP-binding protein BztD (bztD) from Rhodobacter capsulatus (strain ATCC BAA-309 / NBRC 16581 / SB1003).